Here is a 373-residue protein sequence, read N- to C-terminus: Capsular polysaccharide phosphotransferase (373 aa).

This sequence belongs to the stealth family.

In terms of biological role, part of a capsule gene locus. Expression was not detected under standard growth conditions. In Neisseria meningitidis serogroup B, this protein is Capsular polysaccharide phosphotransferase.